The sequence spans 61 residues: Large ribosomal subunit protein uL30 (61 aa).

This sequence belongs to the universal ribosomal protein uL30 family. As to quaternary structure, part of the 50S ribosomal subunit.

This is Large ribosomal subunit protein uL30 from Nitrosomonas europaea (strain ATCC 19718 / CIP 103999 / KCTC 2705 / NBRC 14298).